The following is a 274-amino-acid chain: MIKVAVTGALGRMGSNIIKTITQQEDMKVVCAFEVPNHPKKGEDVGELIGIGKIGVPLSTADELDKVLKETKPDVLVDFTIAHACVENVKIAAKNGVNLVIGTTGFTEEQKAEIEKAIKENNVAAVISQNFAIGVNIFFKTLEFLAKKLGDYDIEIIEMHHRYKKDAPSGTALRAAEIIKANRGIESVFVYGRYGMTGERKKEEIGIHALRGGDVVGDHTVIFAGDGERIELTHRASSRQAFVNGVILAIRYIADKKEGIYNTFDVLGLNEIKF.

NAD(+)-binding positions include 8–13 (GALGRM), Glu-34, 102–104 (GTT), and 128–131 (SQNF). The active-site Proton donor/acceptor is His-160. His-161 lines the (S)-2,3,4,5-tetrahydrodipicolinate pocket. Lys-164 serves as the catalytic Proton donor. Residue 170 to 171 (GT) coordinates (S)-2,3,4,5-tetrahydrodipicolinate.

The protein belongs to the DapB family.

The protein localises to the cytoplasm. The enzyme catalyses (S)-2,3,4,5-tetrahydrodipicolinate + NAD(+) + H2O = (2S,4S)-4-hydroxy-2,3,4,5-tetrahydrodipicolinate + NADH + H(+). It catalyses the reaction (S)-2,3,4,5-tetrahydrodipicolinate + NADP(+) + H2O = (2S,4S)-4-hydroxy-2,3,4,5-tetrahydrodipicolinate + NADPH + H(+). It participates in amino-acid biosynthesis; L-lysine biosynthesis via DAP pathway; (S)-tetrahydrodipicolinate from L-aspartate: step 4/4. Its function is as follows. Catalyzes the conversion of 4-hydroxy-tetrahydrodipicolinate (HTPA) to tetrahydrodipicolinate. The polypeptide is 4-hydroxy-tetrahydrodipicolinate reductase (Methanocaldococcus jannaschii (strain ATCC 43067 / DSM 2661 / JAL-1 / JCM 10045 / NBRC 100440) (Methanococcus jannaschii)).